An 80-amino-acid chain; its full sequence is Cell division protein ZapB (80 aa).

Residues 3 to 80 are a coiled coil; that stretch reads LEILEQLEAK…GLLGKMEEVE (78 aa). The interval 41–62 is disordered; sequence LEQANNGRSEVEQEAQKARDEQ. Residues 49–62 are compositionally biased toward basic and acidic residues; the sequence is SEVEQEAQKARDEQ.

Belongs to the ZapB family. As to quaternary structure, homodimer. The ends of the coiled-coil dimer bind to each other, forming polymers. Interacts with FtsZ.

The protein localises to the cytoplasm. Its function is as follows. Non-essential, abundant cell division factor that is required for proper Z-ring formation. It is recruited early to the divisome by direct interaction with FtsZ, stimulating Z-ring assembly and thereby promoting cell division earlier in the cell cycle. Its recruitment to the Z-ring requires functional FtsA or ZipA. The sequence is that of Cell division protein ZapB from Aliivibrio salmonicida (strain LFI1238) (Vibrio salmonicida (strain LFI1238)).